Here is a 2682-residue protein sequence, read N- to C-terminus: 3-methylorcinaldehyde synthase (2682 aa).

An N-terminal acylcarrier protein transacylase domain (SAT) region spans residues 111–272; it reads LIPLVVIEQL…TEITLYGAFH (162 aa). The active-site Nucleophile; for transacylase activity is the Cys154. Catalysis depends on His272, which acts as the Proton donor/acceptor; for transacylase activity. Residues 401-826 enclose the Ketosynthase family 3 (KS3) domain; sequence ESDIAVIGMA…GSNASMIVMQ (426 aa). Residues Cys573, His708, and His749 each act as for beta-ketoacyl synthase activity in the active site. Residues 947–1237 form a malonyl-CoA:ACP transacylase (MAT) domain region; it reads FGGQVSTHIG…ITAMTSRALD (291 aa). The tract at residues 1339 to 1468 is N-terminal hotdog fold; sequence LTFVGFQDSS…GKIKFTNARD (130 aa). Residues 1339–1651 enclose the PKS/mFAS DH domain; it reads LTFVGFQDSS…YVKIPKLSMQ (313 aa). The tract at residues 1367-1649 is product template (PT) domain; that stretch reads LLLGHMTIQT…IAYVKIPKLS (283 aa). His1371 acts as the Proton acceptor; for dehydratase activity in catalysis. A C-terminal hotdog fold region spans residues 1496 to 1651; that stretch reads VDEVLANRSI…YVKIPKLSMQ (156 aa). Asp1555 serves as the catalytic Proton donor; for dehydratase activity. Positions 1723–1797 constitute a Carrier domain; sequence ENITERVKAV…DLMKVVTGVV (75 aa). The residue at position 1757 (Ser1757) is an O-(pantetheine 4'-phosphoryl)serine. Positions 2021-2211 are methyltransferase domain; sequence EWPLNQVMYT…AGYGHVYWTE (191 aa). The segment at 2303 to 2548 is NADPH-binding (R) domain; the sequence is VTGATGGLGA…LGWTPADAIA (246 aa).

It functions in the pathway secondary metabolite biosynthesis; terpenoid biosynthesis. Non-reducing polyketide synthase; part of the gene cluster that mediates the biosynthesis of eupenifeldin, a bistropolone meroterpenoid that acts as an antitumor agent. The first step of eupenifeldin biosynthesis is the biosynthesis of 3-methylorcinaldehyde performed by the non-reducing polyketide synthase eupA. Oxidative dearomatization of 3-methylorcinaldehyde likely catalyzed by the FAD-dependent monooxygenase eupB is followed by oxidative ring expansion by the 2-oxoglutarate-dependent dioxygenase eupC to provide the first tropolone metabolite, tropolone stipitaldehyde. In parallel, generation of sesquiterpene alpha-humulene from farnesylpyrophosphate (FPP) is catalyzed by the terpene cyclase eupE. The cytochrome P450 monooxygenase eupD then hydroxylates humulene to humulenol. The putative Diels-Alderase eupF probably catalyzes the formation of the tropolone-humulene skeleton by linking humulenol and the polyketide moiety. The short-chain dehydrogenase/reductase eupG and the flavin-dependent monooxygenase eupH are also essential for eupenifeldin biosynthesis and are likely the additional decorating enzymes of the tropolone-humulene skeleton to produce final eupenifeldin or derivatives. The sequence is that of 3-methylorcinaldehyde synthase from Phoma sp.